Reading from the N-terminus, the 312-residue chain is D-apiose import binding protein (312 aa).

The N-terminal stretch at 1 to 26 (MKASKRWVALAAATLTLFTATGTAQA) is a signal peptide. D-apiofuranose is bound by residues asparagine 39, 115-116 (DR), 162-164 (DIN), arginine 168, asparagine 218, aspartate 243, and glutamine 263.

Belongs to the bacterial solute-binding protein 2 family.

The protein localises to the periplasm. In terms of biological role, part of an ABC transporter complex involved in D-apiose import. Binds D-apiose, D-ribose and D-ribulose. In Paraburkholderia graminis (strain ATCC 700544 / DSM 17151 / LMG 18924 / NCIMB 13744 / C4D1M), this protein is D-apiose import binding protein.